The primary structure comprises 248 residues: MNHIDFGFKKVDYTKKQGLVNSVFSNVADKYDLMNDLMSFGLHRLWKDEFIRRIPNLNSHILDVASGSGDIALKLAKKARDRGNNIALTLSDINEEMLKNAKKKTIDLNLFQNLKFTVASAEELPYPDNSFDYYTIAFGIRNVPDINKALKEAYRVLKPMGKFICLEFSKVKESYFKDFYKFYSFSIIPTIGQVITGNKEAYEYLVESIELFPSQDEFRIMIKEAGFEEVGYKNLSGGIVAIHSGYKI.

S-adenosyl-L-methionine-binding residues include S68 and D92.

This sequence belongs to the class I-like SAM-binding methyltransferase superfamily. MenG/UbiE family.

It catalyses the reaction a 2-demethylmenaquinol + S-adenosyl-L-methionine = a menaquinol + S-adenosyl-L-homocysteine + H(+). It carries out the reaction a 2-methoxy-6-(all-trans-polyprenyl)benzene-1,4-diol + S-adenosyl-L-methionine = a 5-methoxy-2-methyl-3-(all-trans-polyprenyl)benzene-1,4-diol + S-adenosyl-L-homocysteine + H(+). It participates in quinol/quinone metabolism; menaquinone biosynthesis; menaquinol from 1,4-dihydroxy-2-naphthoate: step 2/2. Its pathway is cofactor biosynthesis; ubiquinone biosynthesis. In terms of biological role, methyltransferase required for the conversion of demethylmenaquinol (DMKH2) to menaquinol (MKH2) and the conversion of 2-polyprenyl-6-methoxy-1,4-benzoquinol (DDMQH2) to 2-polyprenyl-3-methyl-6-methoxy-1,4-benzoquinol (DMQH2). The sequence is that of Ubiquinone/menaquinone biosynthesis C-methyltransferase UbiE from Rickettsia akari (strain Hartford).